Consider the following 153-residue polypeptide: Large ribosomal subunit protein uL15 (153 aa).

Positions 21-41 (RGIGSGKGKTGGRGIKGQKSR) are disordered. Residues 23–35 (IGSGKGKTGGRGI) are compositionally biased toward gly residues.

It belongs to the universal ribosomal protein uL15 family. In terms of assembly, part of the 50S ribosomal subunit.

Its function is as follows. Binds to the 23S rRNA. This Rickettsia massiliae (strain Mtu5) protein is Large ribosomal subunit protein uL15.